A 149-amino-acid polypeptide reads, in one-letter code: Calmodulin-like protein 3 (149 aa).

EF-hand domains follow at residues 8–43 (EQVTEFKEAFSLFDKDGDGCITTRELGTVMRSLGQN), 44–79 (PTEAELRDMMSEIDRDGNGTVDFPEFLGMMARKMKD), 81–116 (DNEEEIREAFRVFDKDGNGFVSAAELRHVMTRLGEK), and 117–149 (LSDEEVDEMIRAADTDGDGQVNYEEFVRVLVSK). Residues aspartate 21, aspartate 23, aspartate 25, cysteine 27, glutamate 32, aspartate 57, aspartate 59, asparagine 61, threonine 63, glutamate 68, aspartate 94, aspartate 96, asparagine 98, glutamate 105, aspartate 130, aspartate 132, aspartate 134, glutamine 136, and glutamate 141 each contribute to the Ca(2+) site.

Belongs to the calmodulin family. In terms of assembly, interacts with MYO10, the interaction is calcium-dependent and essential for MYO10 function in filopodial extension. As to expression, expressed in normal mammary, prostate, cervical, and epidermal tissues. It is greatly reduced or undetectable in transformed cells.

Its function is as follows. May function as a specific light chain of unconventional myosin-10 (MYO10), also enhances MYO10 translation, possibly by acting as a chaperone for the emerging MYO10 heavy chain protein. May compete with calmodulin by binding, with different affinities, to cellular substrates. The chain is Calmodulin-like protein 3 (CALML3) from Homo sapiens (Human).